A 228-amino-acid chain; its full sequence is Ephrin-A5b (228 aa).

The signal sequence occupies residues 1–20; it reads MLQAEMIVFVGVILWMCVFS. Residues 29–162 enclose the Ephrin RBD domain; sequence ADRYAVFWNR…KLKVFVRPPN (134 aa). Asn-37 is a glycosylation site (N-linked (GlcNAc...) asparagine). Disulfide bonds link Cys-62–Cys-102 and Cys-90–Cys-151. The segment covering 184–198 has biased composition (basic and acidic residues); the sequence is LEPRDDTSHEAEPSR. A disordered region spans residues 184 to 205; sequence LEPRDDTSHEAEPSRSDVSTSG. Residue Ser-204 is the site of GPI-anchor amidated serine attachment. Residues 205–228 constitute a propeptide, removed in mature form; it reads GLRHQTSRPLLALLLLCISLYLLL.

It belongs to the ephrin family. Widespread expression in the embryo.

The protein resides in the cell membrane. Cell surface GPI-bound ligand for Eph receptors, a family of receptor tyrosine kinases which are crucial for migration, repulsion and adhesion during neuronal, vascular and epithelial development. Binds promiscuously Eph receptors residing on adjacent cells, leading to contact-dependent bidirectional signaling into neighboring cells. Induces compartmentalized signaling within a caveolae-like membrane microdomain when bound to the extracellular domain of its cognate receptor. This signaling event requires the activity of the Fyn tyrosine kinase. Activates the epha3 receptor to regulate cell-cell adhesion and cytoskeletal organization. With the receptor epha2 may regulate lens fiber cells shape and interactions and be important for lens transparency maintenance. May function actively to stimulate axon fasciculation. Controls axon growth and may be involved in the creation of the retino-tectal map. This Danio rerio (Zebrafish) protein is Ephrin-A5b (efna5b).